A 365-amino-acid polypeptide reads, in one-letter code: Cobalt-precorrin-5B C(1)-methyltransferase (365 aa).

This sequence belongs to the CbiD family.

The enzyme catalyses Co-precorrin-5B + S-adenosyl-L-methionine = Co-precorrin-6A + S-adenosyl-L-homocysteine. It participates in cofactor biosynthesis; adenosylcobalamin biosynthesis; cob(II)yrinate a,c-diamide from sirohydrochlorin (anaerobic route): step 6/10. Catalyzes the methylation of C-1 in cobalt-precorrin-5B to form cobalt-precorrin-6A. The chain is Cobalt-precorrin-5B C(1)-methyltransferase from Clostridium perfringens (strain ATCC 13124 / DSM 756 / JCM 1290 / NCIMB 6125 / NCTC 8237 / Type A).